A 61-amino-acid polypeptide reads, in one-letter code: MDPNCSCATGGSCTCAGSCKCKECKCTSCKKSCCSCCPVGCAKCAQGCVCKGASEKCSCCA.

M1 is modified (N-acetylmethionine). The segment at 1–29 (MDPNCSCATGGSCTCAGSCKCKECKCTSC) is beta. A divalent metal cation contacts are provided by C5, C7, C13, C15, C19, C21, C24, C26, C29, C33, C34, C36, C37, C41, C44, C48, C50, C57, C59, and C60. Residues 30–61 (KKSCCSCCPVGCAKCAQGCVCKGASEKCSCCA) are alpha.

This sequence belongs to the metallothionein superfamily. Type 1 family. In terms of assembly, monomer.

Metallothioneins have a high content of cysteine residues that bind various heavy metals; these proteins are transcriptionally regulated by both heavy metals and glucocorticoids. This chain is Metallothionein-1E (MT1E), found in Homo sapiens (Human).